Here is a 193-residue protein sequence, read N- to C-terminus: Peptidyl-tRNA hydrolase (193 aa).

Tyr15 contacts tRNA. The active-site Proton acceptor is the His20. TRNA contacts are provided by Phe65, Asn67, and Asn113.

Belongs to the PTH family. Monomer.

The protein resides in the cytoplasm. The catalysed reaction is an N-acyl-L-alpha-aminoacyl-tRNA + H2O = an N-acyl-L-amino acid + a tRNA + H(+). Functionally, hydrolyzes ribosome-free peptidyl-tRNAs (with 1 or more amino acids incorporated), which drop off the ribosome during protein synthesis, or as a result of ribosome stalling. In terms of biological role, catalyzes the release of premature peptidyl moieties from peptidyl-tRNA molecules trapped in stalled 50S ribosomal subunits, and thus maintains levels of free tRNAs and 50S ribosomes. This Ehrlichia ruminantium (strain Welgevonden) protein is Peptidyl-tRNA hydrolase.